The sequence spans 247 residues: Small ribosomal subunit protein uS2 (247 aa).

Belongs to the universal ribosomal protein uS2 family.

This chain is Small ribosomal subunit protein uS2, found in Pseudomonas syringae pv. tomato (strain ATCC BAA-871 / DC3000).